The primary structure comprises 333 residues: Autoinducer 2 import system permease protein LsrD (333 aa).

Transmembrane regions (helical) follow at residues 7–27, 45–65, 67–87, 90–110, 118–138, 162–182, 212–232, 240–260, 261–281, and 288–308; these read YGWELTLAALLVLEILLFGLS, ICIGIVALPLTMVIVSGGIDI, FGSTIGLCAIFLGIVFQAGVP, VAIPLTVLIGALCGLINAGLI, LVITLGTLYLFGGSALLLSGL, LFGLPIPLVIFMLCVLLFWLL, TLCMLYAMTGVASAIAAILLV, SDLGASFLMPAITAVVLGGAN, IYGGSGSILGTALAVLLVGYL, and IGTPNQISSALSGALLILVVV.

Belongs to the binding-protein-dependent transport system permease family. AraH/RbsC subfamily. As to quaternary structure, the complex is composed of two ATP-binding proteins (LsrA), two transmembrane proteins (LsrC and LsrD) and a solute-binding protein (LsrB).

The protein localises to the cell inner membrane. Part of the ABC transporter complex LsrABCD involved in autoinducer 2 (AI-2) import. Probably responsible for the translocation of the substrate across the membrane. This is Autoinducer 2 import system permease protein LsrD (lsrD) from Yersinia pseudotuberculosis serotype O:1b (strain IP 31758).